A 399-amino-acid polypeptide reads, in one-letter code: MEITPSDVIKTLPRQEFSLVFQKVKEMEKTGAHIINLGQGNPDLPTPPHIVEALREASLNPSFHGYGPFRGYPFLKEAIAAFYKREYGVTINPETEVALFGGGKAGLYVLTQCLLNPGDIALVPNPGYPEYLSGITMARAELYEMPLYEENGYLPDFEKIDPAVLEKAKLMFLNYPNNPTGAVADAAFYAKAAAFAKEHNIHLIHDFAYGAFEFDQKPASFLEAEDAKTVGAELYSFSKTFNMAGWRMAFAVGNEKIIQAVNEFQDHVFVGMFGGLQQAASAALSGDPEHTESLKRIYKERIDFFTALCEKELGWKMEKPKGTFYVWAEIPNTFETSHQFSDYLLEHAHVVVTPGEIFGSNGKRHVRISMVSKQEDLREFVTRIQKLNLPFGSLQETSR.

Residues 103-104, tyrosine 128, asparagine 178, tyrosine 209, and 236-238 contribute to the pyridoxal 5'-phosphate site; these read GK and SFS. Lysine 239 is modified (N6-(pyridoxal phosphate)lysine). Arginine 247 contacts pyridoxal 5'-phosphate.

It belongs to the class-I pyridoxal-phosphate-dependent aminotransferase family. As to quaternary structure, homodimer. Requires pyridoxal 5'-phosphate as cofactor.

The protein resides in the cytoplasm. It participates in antibiotic biosynthesis; bacilysin biosynthesis. In terms of biological role, part of the bacABCDEF operon responsible for the biosynthesis of the nonribosomally synthesized dipeptide antibiotic bacilysin, composed of L-alanine and L-anticapsin. Bacilysin is an irreversible inactivator of the glutaminase domain of glucosamine synthetase. Catalyzes the reductive amination of the C2 ketone of tetrahydro-hydroxyphenylpyruvate (H4HPP), with L-Phe as an amino donor, to yield tetrahydrotyrosine (H4Tyr) diastereomer. D-Phe is not an effective amino donor. BacF associated to BacG converts 3E,7R- and 3Z,7R-ex-H2HPP to 2S,4R,7R- and 2S,4S,7R-H4Tyr, respectively. Given that bacilysin has the 2S,4S stereochemistry in its anticapsin moiety, it is likely that the 2S,4S-H4Tyr is the diastereomer used for the biosynthesis. This Bacillus subtilis (strain 168) protein is Transaminase BacF.